A 239-amino-acid chain; its full sequence is Probable GTP-binding protein EngB (239 aa).

The 197-residue stretch at 23–219 (QVPEIAFAGR…NDKILELLGL (197 aa)) folds into the EngB-type G domain. Residues 31–38 (GRSNAGKS), 58–62 (GRTQH), 92–95 (DLPG), 159–162 (TKSD), and 193–200 (FTAQLFSA) each bind GTP. Residues serine 38 and threonine 60 each contribute to the Mg(2+) site.

It belongs to the TRAFAC class TrmE-Era-EngA-EngB-Septin-like GTPase superfamily. EngB GTPase family. Requires Mg(2+) as cofactor.

Necessary for normal cell division and for the maintenance of normal septation. The protein is Probable GTP-binding protein EngB of Herminiimonas arsenicoxydans.